The following is a 451-amino-acid chain: UPF0210 protein NGO_1297 (451 aa).

It belongs to the UPF0210 family. As to quaternary structure, homodimer.

This Neisseria gonorrhoeae (strain ATCC 700825 / FA 1090) protein is UPF0210 protein NGO_1297.